Consider the following 397-residue polypeptide: Anhydro-N-acetylmuramic acid kinase (397 aa).

Gly-9–Asp-16 contributes to the ATP binding site.

Belongs to the anhydro-N-acetylmuramic acid kinase family.

The enzyme catalyses 1,6-anhydro-N-acetyl-beta-muramate + ATP + H2O = N-acetyl-D-muramate 6-phosphate + ADP + H(+). It participates in amino-sugar metabolism; 1,6-anhydro-N-acetylmuramate degradation. Its pathway is cell wall biogenesis; peptidoglycan recycling. In terms of biological role, catalyzes the specific phosphorylation of 1,6-anhydro-N-acetylmuramic acid (anhMurNAc) with the simultaneous cleavage of the 1,6-anhydro ring, generating MurNAc-6-P. Is required for the utilization of anhMurNAc either imported from the medium or derived from its own cell wall murein, and thus plays a role in cell wall recycling. The chain is Anhydro-N-acetylmuramic acid kinase from Rhodococcus erythropolis (strain PR4 / NBRC 100887).